The sequence spans 179 residues: Large ribosomal subunit protein uL5 (179 aa).

The protein belongs to the universal ribosomal protein uL5 family. As to quaternary structure, part of the 50S ribosomal subunit; part of the 5S rRNA/L5/L18/L25 subcomplex. Contacts the 5S rRNA and the P site tRNA. Forms a bridge to the 30S subunit in the 70S ribosome.

Its function is as follows. This is one of the proteins that bind and probably mediate the attachment of the 5S RNA into the large ribosomal subunit, where it forms part of the central protuberance. In the 70S ribosome it contacts protein S13 of the 30S subunit (bridge B1b), connecting the 2 subunits; this bridge is implicated in subunit movement. Contacts the P site tRNA; the 5S rRNA and some of its associated proteins might help stabilize positioning of ribosome-bound tRNAs. The protein is Large ribosomal subunit protein uL5 of Vesicomyosocius okutanii subsp. Calyptogena okutanii (strain HA).